A 293-amino-acid polypeptide reads, in one-letter code: L-ornithine N(alpha)-acyltransferase (293 aa).

This sequence belongs to the acetyltransferase family. OlsB subfamily.

It carries out the reaction a (3R)-hydroxyacyl-[ACP] + L-ornithine = a lyso-ornithine lipid + holo-[ACP] + H(+). Its pathway is lipid metabolism. Functionally, catalyzes the first step in the biosynthesis of ornithine lipids, which are phosphorus-free membrane lipids. Catalyzes the 3-hydroxyacyl-acyl carrier protein-dependent acylation of ornithine to form lyso-ornithine lipid (LOL). This is L-ornithine N(alpha)-acyltransferase from Agrobacterium fabrum (strain C58 / ATCC 33970) (Agrobacterium tumefaciens (strain C58)).